A 3590-amino-acid chain; its full sequence is Filamentous hemagglutinin (3590 aa).

2 disordered regions span residues 3256–3309 and 3417–3498; these read GGGS…VEVS and APPP…GRHV. Pro residues predominate over residues 3289–3299; sequence PSRPTTPPASP. The segment covering 3300–3309 has biased composition (low complexity); that stretch reads QPIRATVEVS. The span at 3417–3432 shows a compositional bias: pro residues; that stretch reads APPPVVETAQPLPPVK.

It is found in the cell surface. Its function is as follows. Evidence for a role in host-cell binding and infection. The polypeptide is Filamentous hemagglutinin (fhaB) (Bordetella pertussis (strain Tohama I / ATCC BAA-589 / NCTC 13251)).